Consider the following 238-residue polypeptide: N-methyltransferase vrtF (238 aa).

This sequence belongs to the methyltransferase superfamily.

It participates in secondary metabolite biosynthesis; terpenoid biosynthesis. N-methyltransferase; part of the gene cluster that mediates the biosynthesis of viridicatumtoxin, a tetracycline-like fungal meroterpenoid with a unique, fused spirobicyclic ring system. The first step of the pathway is the production of the malonamoyl-CoA starter unit for the polyketide synthase vrtA. The aldolase vrtJ may be involved in the synthesis of the malonamate substrate for malonamoyl-CoA synthetase vrtB. The polyketide synthase vrtA then may utilize the malonamoyl-CoA starter unit, followed by sequential condensation of eight malonyl-CoA units to form the polyketide backbone. The cyclization of the last ring could be mediated by the lactamase-like protein vrtG. The proposed post-PKS tailoring steps are a hydroxylation at C5 catalyzed the cytochrome P450 monooxygenase vrtE, a hydroxylation at C12a catalyzed by VrtH and/or VrtI, and an O-methylation by the O-methyltransferase vrtF. VrtC is then proposed to catalyze the transfer of a geranyl group synthesized by vrtD to the aromatic C ring of the tetracyclic polyketide intermediate of viridicatumtoxin to yield previridicatumtoxin. Finally, the cytochrome P450 monooxygenase vrtK catalyzes the spirocyclization of the geranyl moiety of previridicatumtoxin to afford viridicatumtoxin. This is N-methyltransferase vrtF from Penicillium aethiopicum.